The chain runs to 189 residues: MERISWNQYFMAQSHLLALRSTCPRLSVGATIVRDKRMIAGGYNGSIAGGVHCADEGCLMIDDHCARTIHAEMNAILQCSKFGVPTDGAEIYVTHYPCIQCCKSIIQAGIKTVYYAEDYKTHPYAQELFEQAGVTVEQVELDEMIVDLKNREKLSFVAGLIGKLADAGLAEEELKKIHEQANTLFTSYV.

A CMP/dCMP-type deaminase domain is found at 5–132 (SWNQYFMAQS…PYAQELFEQA (128 aa)). His70 is a binding site for Zn(2+). Glu72 serves as the catalytic Proton donor. Zn(2+) contacts are provided by Cys98 and Cys101.

Belongs to the cytidine and deoxycytidylate deaminase family. Requires Zn(2+) as cofactor.

Functionally, dispensable for transformability. In Bacillus subtilis (strain 168), this protein is ComE operon protein 2 (comEB).